A 138-amino-acid polypeptide reads, in one-letter code: ATP synthase epsilon chain (138 aa).

Belongs to the ATPase epsilon chain family. F-type ATPases have 2 components, CF(1) - the catalytic core - and CF(0) - the membrane proton channel. CF(1) has five subunits: alpha(3), beta(3), gamma(1), delta(1), epsilon(1). CF(0) has three main subunits: a, b and c.

The protein localises to the cell membrane. Functionally, produces ATP from ADP in the presence of a proton gradient across the membrane. In Streptococcus suis (strain 98HAH33), this protein is ATP synthase epsilon chain.